A 521-amino-acid polypeptide reads, in one-letter code: Insulinoma-associated protein 1 (521 aa).

The segment covering 1–12 has biased composition (basic residues); the sequence is MPRGFLVKRSKK. The segment at 1–20 is SNAG domain; it reads MPRGFLVKRSKKSTPVSYRV. 3 disordered regions span residues 1 to 59, 76 to 107, and 180 to 230; these read MPRG…PPAL, GPPP…PTRP, and AEAA…KPKA. The tract at residues 2 to 7 is required and sufficient for interaction with KDM1A; the sequence is PRGFLV. Residues 43 to 56 are necessary for interaction with CCND1; the sequence is PPVPSPGPLPPPPP. 2 stretches are compositionally biased toward pro residues: residues 43–58 and 76–85; these read PPVP…PPPA and GPPPPPPPGP. Positions 209-223 are enriched in low complexity; that stretch reads AAVATEPPAKAAKAP. Residues 272–292 form a C2H2-type 1; atypical zinc finger; that stretch reads FICQLCKEEYADPFALAQHKC. The segment at 300–322 adopts a C2H2-type 2 zinc-finger fold; it reads YRCPECAKVFSCPANLASHRRWH. Residues 320-369 are disordered; sequence RWHKPRPVPAAARAPEPEAATRAEAREAAGGGSSDRDTPSPGGVSESGSE. Residues 334-346 show a composition bias toward basic and acidic residues; the sequence is PEPEAATRAEARE. The segment at 373–395 adopts a C2H2-type 3 zinc-finger fold; that stretch reads YECHHCAKKFRRQAYLRKHLLAH. Residues 398–419 form a disordered region; that stretch reads ALQAKGAPPPPPPPPPPAEDIL. Over residues 404–415 the composition is skewed to pro residues; that stretch reads APPPPPPPPPPA. C2H2-type zinc fingers lie at residues 452–475 and 480–503; these read HLCP…RLLH and FPCK…NKCH.

The protein belongs to the INSM1 family. In terms of assembly, interacts (via the N-terminal region) with CCND1 (via cyclin N-terminal domain); the interaction competes with the binding of CCND1 to CDK4 during cell cycle progression and increases its transcriptional repressor activity. Interacts with HDAC3; the interaction increases its transcriptional repressor activity. Interacts (via the SNAG domain) with HDAC1. Interacts (via the SNAG domain) with HDAC2. Interacts (via the SNAG domain) with KDM1A. Interacts (via the SNAG domain) with RCOR1. Interacts with SORBS1. Expressed in adrenal gland. Expressed in the dentate gyrus of the hippocampus and the wall of the lateral ventricle. Expressed in pancreatic and intestinal endocrine cells.

It is found in the nucleus. In terms of biological role, sequence-specific DNA-binding transcriptional regulator that plays a key role in neurogenesis and neuroendocrine cell differentiation during embryonic and/or fetal development. Binds to the consensus sequence 5'-[TG][TC][TC][TT][GA]GGG[CG]A-3' in target promoters. Acts as a transcriptional repressor of NEUROD1 and INS expression via its interaction with cyclin CCND1 in a cell cycle-independent manner. Negatively regulates skeletal muscle-specific gene expression in endocrine cells of the pituitary by inhibiting the Notch signaling pathway. Represses target gene transcription by recruiting chromatin-modifying factors, such as HDAC1, HDAC2, HDAC3, KDM1A and RCOR1 histone deacetylases. Binds to its own promoter, suggesting autoregulation as a self-control feedback mechanism. Competes with histone H3 for the same binding site on the histone demethylase complex formed by KDM1A and RCOR1, and thereby inhibits demethylation of histone H3 at 'Lys-4'. Promotes the generation and expansion of neuronal basal progenitor cells in the developing neocortex. Involved in the differentiation of endocrine cells of the developing anterior pituitary gland, of the pancreas and intestine, and of sympatho-adrenal cells in the peripheral nervous system. Promotes cell cycle signaling arrest and inhibition of cellular proliferation. This Mus musculus (Mouse) protein is Insulinoma-associated protein 1 (Insm1).